The chain runs to 404 residues: MRNINVQLNPLSDIEKLQVELVERKGLGHPDYIADAVAEEASRKLSLYYLKKYGVILHHNLDKTLVVGGQATPRFKGGDIIQPIYIIVAGRATTEVKTESGIDQIPVGTIIIESVKEWIRNNFRYLDAERHVIVDYKIGKGSSDLVGIFEASKRVPLSNDTSFGVGFAPLTKLEKLVYETERHLNSKQFKAKLPEVGEDIKVMGLRRGNEVDLTIAMATISELIEDVNHYINVKEQVRNQILDLASKIAPGYNVRVYVNTGDKIDKNILYLTVTGTSAEHGDDGMTGRGNRGVGLITPMRPMSLEATAGKNPVNHVGKLYNVLANLIANKIAQEVKDVKFSQVQVLGQIGRPIDDPLIANVDVITYDGKLTDETKNEISGIVDEMLSSFNKLTELILEGKATLF.

139-144 (GKGSSD) provides a ligand contact to ATP.

It belongs to the AdoMet synthase 2 family. Mg(2+) is required as a cofactor.

It carries out the reaction L-methionine + ATP + H2O = S-adenosyl-L-methionine + phosphate + diphosphate. Its pathway is amino-acid biosynthesis; S-adenosyl-L-methionine biosynthesis; S-adenosyl-L-methionine from L-methionine: step 1/1. Functionally, catalyzes the formation of S-adenosylmethionine from methionine and ATP. The chain is S-adenosylmethionine synthase from Saccharolobus solfataricus (strain ATCC 35092 / DSM 1617 / JCM 11322 / P2) (Sulfolobus solfataricus).